A 93-amino-acid polypeptide reads, in one-letter code: MLKPLGDRVVLKVEEKEQKVGGFVIAGAGQDATKTAKVVAAGDGIRTLNGELVAPSVKAGDTVLVESHAGIEVKDGEEKYLVVNEANILAIVE.

It belongs to the GroES chaperonin family. Heptamer of 7 subunits arranged in a ring. Interacts with the chaperonin GroEL.

The protein resides in the cytoplasm. In terms of biological role, together with the chaperonin GroEL, plays an essential role in assisting protein folding. The GroEL-GroES system forms a nano-cage that allows encapsulation of the non-native substrate proteins and provides a physical environment optimized to promote and accelerate protein folding. GroES binds to the apical surface of the GroEL ring, thereby capping the opening of the GroEL channel. The sequence is that of Co-chaperonin GroES from Streptococcus anginosus.